A 108-amino-acid chain; its full sequence is Nucleoid-associated protein PSHAa1202 (108 aa).

2 disordered regions span residues 1 to 20 and 87 to 108; these read MFKGGMGNMMKQAQQMQDRM and TQERMGKVTGGMQLPPGMKMPF.

Belongs to the YbaB/EbfC family. In terms of assembly, homodimer.

The protein resides in the cytoplasm. It is found in the nucleoid. Functionally, binds to DNA and alters its conformation. May be involved in regulation of gene expression, nucleoid organization and DNA protection. The chain is Nucleoid-associated protein PSHAa1202 from Pseudoalteromonas translucida (strain TAC 125).